Reading from the N-terminus, the 484-residue chain is Regulator of G-protein signaling 9 (484 aa).

Positions 30-105 constitute a DEP domain; sequence PDTGVRVQNQ…PDSSLYRFQT (76 aa). The region spanning 219 to 280 is the G protein gamma domain; it reads VVSVRKEIMY…ITDDTQFWDL (62 aa). Positions 299 to 414 constitute an RGS domain; that stretch reads NFSELIRDPK…LKSPIYKEML (116 aa). Residues 460–484 form a disordered region; it reads TTVDITQVMSKLDRRSQLRKEPPPK. Over residues 470–484 the composition is skewed to basic and acidic residues; sequence KLDRRSQLRKEPPPK.

In terms of assembly, heterodimer with GNB5. Interacts with RGS7BP, leading to regulate the subcellular location of the heterodimer formed with GNB5. Component of the RGS9-1-Gbeta5 complex composed of RGS9 (RGS9-1), Gbeta5 (GNB5) and RGS9BP. Interacts with PDE6G and GNAT1. Phosphorylation is decreased by light exposition. In terms of tissue distribution, photoreceptor outer segments.

The protein localises to the membrane. Functionally, inhibits signal transduction by increasing the GTPase activity of G protein alpha subunits thereby driving them into their inactive GDP-bound form. Binds to GNAT1. Involved in phototransduction; key element in the recovery phase of visual transduction. This chain is Regulator of G-protein signaling 9 (RGS9), found in Bos taurus (Bovine).